Reading from the N-terminus, the 379-residue chain is Tryptophan 2,3-dioxygenase (379 aa).

Substrate-binding positions include 57–61 and Arg128; that span reads FIITH. His312 is a heme binding site. Substrate is bound at residue Thr327.

It belongs to the tryptophan 2,3-dioxygenase family. In terms of assembly, homotetramer. Dimer of dimers. Heme serves as cofactor.

The catalysed reaction is L-tryptophan + O2 = N-formyl-L-kynurenine. The protein operates within amino-acid degradation; L-tryptophan degradation via kynurenine pathway; L-kynurenine from L-tryptophan: step 1/2. It participates in pigment biosynthesis; ommochrome biosynthesis. Its function is as follows. Heme-dependent dioxygenase that catalyzes the oxidative cleavage of the L-tryptophan (L-Trp) pyrrole ring and converts L-tryptophan to N-formyl-L-kynurenine. Catalyzes the oxidative cleavage of the indole moiety. Required during larval growth to control the level of potentially harmful free tryptophan in the hemolymph. In the adult the same reaction is the first step in the ommochrome biosynthetic pathway. This chain is Tryptophan 2,3-dioxygenase, found in Drosophila melanogaster (Fruit fly).